The chain runs to 459 residues: N-chimaerin (459 aa).

The residue at position 2 (Ala-2) is an N-acetylalanine. One can recognise an SH2 domain in the interval 49–135 (EFHGMISREA…IETKAAEYIA (87 aa)). Thr-192 is modified (phosphothreonine). The segment at 205–255 (IHNFKVHTFRGPHWCEYCANFMWGLIAQGVKCADCGLNVHKQCSKMVPNDC) adopts a Phorbol-ester/DAG-type zinc-finger fold. The Rho-GAP domain maps to 268–459 (CDLTTLVKAH…LLIKNEDILF (192 aa)). Thr-340 carries the post-translational modification Phosphothreonine.

As to quaternary structure, interacts with EPHA4; effector of EPHA4 in axon guidance linking EPHA4 activation to RAC1 regulation. In terms of processing, phosphorylated. Phosphorylation is EPHA4 kinase activity-dependent. As to expression, in neurons in brain regions that are involved in learning and memory processes.

Functionally, GTPase-activating protein for p21-rac and a phorbol ester receptor. Involved in the assembly of neuronal locomotor circuits as a direct effector of EPHA4 in axon guidance. This chain is N-chimaerin (CHN1), found in Homo sapiens (Human).